The sequence spans 816 residues: MGETAGERALSRVHSVRERIGHSLSAHTNELVAVFSRLVNQGKGMLQPHQITAEYNAAIPEAEREKLKNTPFEDLLRGAQEAIVIPPWVALAIRPRPGVWEYVRVNVSELGVEELSVLRYLQFKEQLANGSTDNNFVLELDFGPFNASFPRPSLSKSIGNGVQFLNRHLSSKLFHDKESMYPLLNFLRAHNYKGMTMMLNDRIRSLGTLQGALRKAETHLSGLPADTPYTEFHHRFQELGLEKGWGDCAQRASETIHLLLDLLEAPDPSSLEKFLGTIPMVLNVVILSPHGYFAQANVLGYPDTGGQVVYILDQVRAMENEMLLRIKQQGLDITPKILIVTRMLPDAHGTTCGQRLEKVLGTEHTHILRVPFKTEDGIVRKWISRFEVWPYLEAYTDDVAHEIAGELQANPDLIIGNYSDGNLVACLLAHKLGVTHCTIAHALEKTKYPNSDLYWKKFEDHYHFSCQFTADLIAMNHADFIITSTFQEIAGNKDTVGQYESHMAFTMPGLYRVVHGIDVFDPKFNIVSPGADMSIYFPYTEQQKRLTSLHTEIEELLFSDVENAEHKFVLKDKKKPIIFSMARLDRVKNMTGLVEMYGRNPRLQELVNLVVVCGDHGKVSKDKEEQVEFKKMFDLIEKYNLSGHIRWISAQMNRVRNGELYRYICDMKGAFVQPAFYEAFGLTVIEAMTCGLPTFATAYGGPAEIIVNGVSGYHIDPYQNDKASALLVGFFGKCQEDPSHWNKISQGGLQRIEEKYTWKLYSERLMTLSGVYGFWKYVSNLDRRETRRYLEMLYALKYRKMAATVPLAVEGETSGE.

Residues 280–757 form a GT-B glycosyltransferase region; sequence MVLNVVILSP…GLQRIEEKYT (478 aa).

It belongs to the glycosyltransferase 1 family. Plant sucrose synthase subfamily. As to quaternary structure, forms homotetramers and heterotetramers with SS1, all three possible heterotetramers are formed. In terms of tissue distribution, abundant in developing endosperm, low in aleurone, and undetected in coleoptiles and roots. Also detected in crude extracts of anthers and in immature embryos.

The enzyme catalyses an NDP-alpha-D-glucose + D-fructose = a ribonucleoside 5'-diphosphate + sucrose + H(+). In terms of biological role, sucrose-cleaving enzyme that provides UDP-glucose and fructose for various metabolic pathways. In Hordeum vulgare (Barley), this protein is Sucrose synthase 2 (SS2).